The primary structure comprises 890 residues: MSGVNEIRSAFLNYFGKDGHEIVPSSPLVPRNDPTLMFTNAGMVQFKNVFTGVEKRANHRATTSQKCVRAGGKHNDLDNVGYTARHHTFFEMLGNFSFGDYFKDHAIELAWNLITKEFGLPKERLLVTVFSEDDEAFALWKKIAGLPDSKIIRIPTSDNFWQMGDTGPCGPCSEIFFDHGDHIPGGPPGSPEEDGDRFIEIWNLVFMQFDQIAPGQRNPLPKPSIDTGMGLERIAAVLQGKHDNYDIDLFQALIRAIAELTGADPKGEHKASLRVIADHLRASSFLIADGVLPSNEGRGYVLRRIMRRAMRHGQLLGATEPLMWRLVWALVREMGQAYPELVRAEPMIEETLRLEETRFRKTLDRGLIILDEKSSTLKKGDMFDGETAFTLYDTYGFPLDLTQDALRNRGISVDIASFTDAMDRQRAKARASWAGSGDTATETVWFGLREQLGATEFLGYETETAEGVVAALVKDGQKVDQLKVGEAGAIVLNQTPFYAESGGQVGDTGVMTGEGVRFRVTETQKKAHDLFVHLGTVEQGTLTPDTALLLEVDHTRRSSIRANHSATHLLHEALRQVLGDHIAQKGSLVAEDRLRFDFVHQKPISADELRRVEDIANEVVLENDEVTTRLMAVDDAREAGARALFGEKYGDEVRVVTMGKSARQHGSNALGWSVELCGGTHVRRTGDIGLISITGESAVASGVRRIEALTGRFARQSANAAIDTAKATAAELRTSVDDMPARVAALMDERKKLERELAEARKKLAMGGGGAAAANGEAGVREVGGVKLLARAVEGIEIKDLKSLVDQGKKQLGSGVIALVATSADGKGSIVVGVTPDLVARFSAVDLVRKASEVLGGKGGGGKPDMAQAGGPDGSKAQAALDAIAEAIGG.

Residues His-564, His-568, Cys-677, and His-681 each contribute to the Zn(2+) site.

The protein belongs to the class-II aminoacyl-tRNA synthetase family. Requires Zn(2+) as cofactor.

The protein resides in the cytoplasm. It carries out the reaction tRNA(Ala) + L-alanine + ATP = L-alanyl-tRNA(Ala) + AMP + diphosphate. In terms of biological role, catalyzes the attachment of alanine to tRNA(Ala) in a two-step reaction: alanine is first activated by ATP to form Ala-AMP and then transferred to the acceptor end of tRNA(Ala). Also edits incorrectly charged Ser-tRNA(Ala) and Gly-tRNA(Ala) via its editing domain. This chain is Alanine--tRNA ligase, found in Rhodopseudomonas palustris (strain BisB18).